Reading from the N-terminus, the 397-residue chain is Phosphoglycerate kinase (397 aa).

Substrate is bound by residues 22 to 24 (DLN), Arg37, 60 to 63 (HFGR), Arg119, and Arg152. Residues Lys202, Glu324, and 354–357 (GGDT) each bind ATP.

Belongs to the phosphoglycerate kinase family. As to quaternary structure, monomer.

The protein localises to the cytoplasm. It carries out the reaction (2R)-3-phosphoglycerate + ATP = (2R)-3-phospho-glyceroyl phosphate + ADP. Its pathway is carbohydrate degradation; glycolysis; pyruvate from D-glyceraldehyde 3-phosphate: step 2/5. This Zymomonas mobilis subsp. mobilis (strain ATCC 31821 / ZM4 / CP4) protein is Phosphoglycerate kinase (pgk).